The sequence spans 241 residues: Ribonuclease PH (241 aa).

Residues arginine 89 and 127-129 contribute to the phosphate site; that span reads GTR.

The protein belongs to the RNase PH family. Homohexameric ring arranged as a trimer of dimers.

It catalyses the reaction tRNA(n+1) + phosphate = tRNA(n) + a ribonucleoside 5'-diphosphate. Functionally, phosphorolytic 3'-5' exoribonuclease that plays an important role in tRNA 3'-end maturation. Removes nucleotide residues following the 3'-CCA terminus of tRNAs; can also add nucleotides to the ends of RNA molecules by using nucleoside diphosphates as substrates, but this may not be physiologically important. Probably plays a role in initiation of 16S rRNA degradation (leading to ribosome degradation) during starvation. This Xanthomonas oryzae pv. oryzae (strain MAFF 311018) protein is Ribonuclease PH.